We begin with the raw amino-acid sequence, 189 residues long: MSPKSSGILKGHFLMAIPGLPDPNFAQTVTCICEHNKTGALGFIINRIHPLLTGQELFEDLKITCNQAIDKIAIHLGGPVQPSGVFVLHGPPFDWHGCLKINDWLGLSNTRDILEAVARQEGPENFIVLLGCAGWGPLQLDNEINDNAWLTIPVSQEILFKTDVKLKWEMTMMQMGIVSDNHSDNSGKA.

It belongs to the UPF0301 (AlgH) family.

This is UPF0301 protein HRM2_24640 from Desulforapulum autotrophicum (strain ATCC 43914 / DSM 3382 / VKM B-1955 / HRM2) (Desulfobacterium autotrophicum).